A 114-amino-acid chain; its full sequence is Small ribosomal subunit protein uS13m (114 aa).

The interval 92 to 114 is disordered; the sequence is DGLPLRGQRSHTNARTSRKRIRK.

Belongs to the universal ribosomal protein uS13 family. In terms of assembly, part of the small ribosomal subunit.

It is found in the mitochondrion. Functionally, located at the top of the head of the small subunit, it contacts several helices of the 18S rRNA. The polypeptide is Small ribosomal subunit protein uS13m (RPS13) (Oenothera berteroana (Bertero's evening primrose)).